The primary structure comprises 422 residues: UDP-N-acetylglucosamine 1-carboxyvinyltransferase (422 aa).

22 to 23 (KN) is a binding site for phosphoenolpyruvate. Arg-93 is a UDP-N-acetyl-alpha-D-glucosamine binding site. Catalysis depends on Cys-117, which acts as the Proton donor. Cys-117 carries the 2-(S-cysteinyl)pyruvic acid O-phosphothioketal modification. Residues 122-126 (RPVDL), Asp-308, and Leu-330 each bind UDP-N-acetyl-alpha-D-glucosamine.

Belongs to the EPSP synthase family. MurA subfamily.

Its subcellular location is the cytoplasm. The enzyme catalyses phosphoenolpyruvate + UDP-N-acetyl-alpha-D-glucosamine = UDP-N-acetyl-3-O-(1-carboxyvinyl)-alpha-D-glucosamine + phosphate. It functions in the pathway cell wall biogenesis; peptidoglycan biosynthesis. Cell wall formation. Adds enolpyruvyl to UDP-N-acetylglucosamine. This is UDP-N-acetylglucosamine 1-carboxyvinyltransferase from Helicobacter pylori (strain Shi470).